A 540-amino-acid polypeptide reads, in one-letter code: 2,3-bisphosphoglycerate-independent phosphoglycerate mutase (540 aa).

2 residues coordinate Mn(2+): aspartate 13 and serine 63. Serine 63 serves as the catalytic Phosphoserine intermediate. Substrate contacts are provided by residues histidine 124, 154-155 (RD), arginine 186, arginine 192, 262-265 (RPDR), and lysine 356. Positions 423, 427, 464, 465, and 483 each coordinate Mn(2+).

The protein belongs to the BPG-independent phosphoglycerate mutase family. In terms of assembly, monomer. Mn(2+) is required as a cofactor.

It catalyses the reaction (2R)-2-phosphoglycerate = (2R)-3-phosphoglycerate. Its pathway is carbohydrate degradation; glycolysis; pyruvate from D-glyceraldehyde 3-phosphate: step 3/5. Catalyzes the interconversion of 2-phosphoglycerate and 3-phosphoglycerate. In Chloroflexus aggregans (strain MD-66 / DSM 9485), this protein is 2,3-bisphosphoglycerate-independent phosphoglycerate mutase.